Consider the following 417-residue polypeptide: GTP-binding protein YPT11 (417 aa).

The segment at methionine 1–glutamate 34 is disordered. Residues glycine 97–threonine 104, aspartate 228–glutamine 232, and asparagine 292–aspartate 295 contribute to the GTP site. 2 S-geranylgeranyl cysteine lipidation sites follow: cysteine 415 and cysteine 416.

This sequence belongs to the small GTPase superfamily. Rab family. As to quaternary structure, interacts with MYO2 (via C-terminal tail domain). Interacts with YIF1, YIP3, YIP4 and YIP5.

The protein localises to the endoplasmic reticulum membrane. Its subcellular location is the bud tip. It is found in the bud neck. In terms of biological role, involved in the positive control of both endoplasmic reticulum (ER) and mitochondrion inheritance during cell divison. Required for the MYO2-dependent retention of newly inherited mitochondria at the bud tip in developing daughter cells. This chain is GTP-binding protein YPT11 (YPT11), found in Saccharomyces cerevisiae (strain AWRI1631) (Baker's yeast).